Here is a 211-residue protein sequence, read N- to C-terminus: FMN-dependent NADH:quinone oxidoreductase 3 (211 aa).

102 to 105 (MWNF) is a binding site for FMN.

Belongs to the azoreductase type 1 family. As to quaternary structure, homodimer. It depends on FMN as a cofactor.

It catalyses the reaction 2 a quinone + NADH + H(+) = 2 a 1,4-benzosemiquinone + NAD(+). The enzyme catalyses N,N-dimethyl-1,4-phenylenediamine + anthranilate + 2 NAD(+) = 2-(4-dimethylaminophenyl)diazenylbenzoate + 2 NADH + 2 H(+). Quinone reductase that provides resistance to thiol-specific stress caused by electrophilic quinones. Functionally, also exhibits azoreductase activity. Catalyzes the reductive cleavage of the azo bond in aromatic azo compounds to the corresponding amines. This Bacillus cereus (strain ATCC 10987 / NRS 248) protein is FMN-dependent NADH:quinone oxidoreductase 3.